The following is a 175-amino-acid chain: NADH-ubiquinone oxidoreductase chain 6 (175 aa).

Helical transmembrane passes span 1–21 (MMTY…VGFS), 27–47 (VYGG…VMNF), 49–69 (GSFL…VVFG), 88–108 (VVLG…LYVL), and 149–169 (YGVW…VVIM).

This sequence belongs to the complex I subunit 6 family. Core subunit of respiratory chain NADH dehydrogenase (Complex I) which is composed of 45 different subunits.

It localises to the mitochondrion inner membrane. The enzyme catalyses a ubiquinone + NADH + 5 H(+)(in) = a ubiquinol + NAD(+) + 4 H(+)(out). Functionally, core subunit of the mitochondrial membrane respiratory chain NADH dehydrogenase (Complex I) which catalyzes electron transfer from NADH through the respiratory chain, using ubiquinone as an electron acceptor. Essential for the catalytic activity and assembly of complex I. The protein is NADH-ubiquinone oxidoreductase chain 6 (MT-ND6) of Pteropus dasymallus (Ryukyu flying fox).